A 793-amino-acid polypeptide reads, in one-letter code: Putative potassium transporter 8 (793 aa).

Over 1–22 (MDLEFGRGMRSPQRDSWKTTLL) the chain is Cytoplasmic. The chain crosses the membrane as a helical span at residues 23 to 43 (LAYQSLGVVYGDLSISPLYVF). Over 44-59 (KSTFAEDIQHSETNEE) the chain is Extracellular. Residues 60–80 (IFGVLSFVFWTLTLIPLIKYV) traverse the membrane as a helical segment. The Cytoplasmic segment spans residues 81–151 (SIVLRADDNG…EKHKKLHTAL (71 aa)). A helical membrane pass occupies residues 152 to 172 (LIMVLIGTCMVIGDGVLTPAI). Residues 173 to 191 (SVFSAVSGLEFSLSKDHRE) lie on the Extracellular side of the membrane. A helical transmembrane segment spans residues 192–212 (YAVIPITCVILAFLFALQHYG). Residues 213-215 (THR) are Cytoplasmic-facing. The chain crosses the membrane as a helical span at residues 216–236 (VGFLFAPIVLAWLICMSALGL). Over 237–264 (YNIIHWNPHVYQALNPCYMFKFLKKTRK) the chain is Extracellular. A helical transmembrane segment spans residues 265–285 (YGWMSLGGILLCMTGSEAMFA). Residues 286–292 (DLGHFSY) are Cytoplasmic-facing. Residues 293–313 (SAIQLAFTSLVYPALILAYMG) traverse the membrane as a helical segment. The Extracellular segment spans residues 314–343 (QAAYLSKHHDFYSNSQVGFYIAVPDKVRWP). The helical transmembrane segment at 344–364 (VLVLAILASVVGSQAIISGTF) threads the bilayer. Over 365–391 (SIINQSQSLSCFPRVKVVHTSDKIHGQ) the chain is Cytoplasmic. Residues 392-412 (IYIPEINWLLMILCIAVTVGF) traverse the membrane as a helical segment. Residues 413-422 (RDTKHMGNAS) are Extracellular-facing. The N-linked (GlcNAc...) asparagine glycan is linked to Asn-420. A helical membrane pass occupies residues 423–443 (GLAVITVMLVTTCLTSLVIML). Residues 444 to 448 (CWRRP) are Cytoplasmic-facing. A helical membrane pass occupies residues 449–469 (PVLALCFLLFFGSVEALYFSA). The Extracellular portion of the chain corresponds to 470-473 (SLIK). A helical membrane pass occupies residues 474–494 (FLEGAWLPILLALFLMAVMLV). The Cytoplasmic segment spans residues 495–793 (WHYTTIKKYE…LLEVGMVYVL (299 aa)). The segment covering 664–675 (DSVQHSSAASVE) has biased composition (polar residues). A disordered region spans residues 664–698 (DSVQHSSAASVETTTTRRRSGGGDDDGSPGGGGGR).

Belongs to the HAK/KUP transporter (TC 2.A.72.3) family.

The protein localises to the membrane. Functionally, high-affinity potassium transporter. In Oryza sativa subsp. japonica (Rice), this protein is Putative potassium transporter 8 (HAK8).